Consider the following 190-residue polypeptide: UPF0316 protein Mboo_0605 (190 aa).

3 consecutive transmembrane segments (helical) span residues 3–23 (IGTFWSVAAIPLLILVARIAE), 41–61 (LAAYVGIVKTGIWLISTGLVL), and 67–87 (FWNLFAYLAGYGMGTVLGMEI).

The protein belongs to the UPF0316 family.

Its subcellular location is the cell membrane. This Methanoregula boonei (strain DSM 21154 / JCM 14090 / 6A8) protein is UPF0316 protein Mboo_0605.